The chain runs to 402 residues: CCA-adding enzyme (402 aa).

G32 and R35 together coordinate ATP. G32 and R35 together coordinate CTP. Mg(2+) contacts are provided by D45 and D47. Positions 116, 159, 162, 165, and 168 each coordinate ATP. CTP contacts are provided by R116, D159, R162, R165, and R168.

This sequence belongs to the tRNA nucleotidyltransferase/poly(A) polymerase family. Bacterial CCA-adding enzyme type 3 subfamily. In terms of assembly, homodimer. Mg(2+) serves as cofactor.

It carries out the reaction a tRNA precursor + 2 CTP + ATP = a tRNA with a 3' CCA end + 3 diphosphate. The catalysed reaction is a tRNA with a 3' CCA end + 2 CTP + ATP = a tRNA with a 3' CCACCA end + 3 diphosphate. Its function is as follows. Catalyzes the addition and repair of the essential 3'-terminal CCA sequence in tRNAs without using a nucleic acid template. Adds these three nucleotides in the order of C, C, and A to the tRNA nucleotide-73, using CTP and ATP as substrates and producing inorganic pyrophosphate. tRNA 3'-terminal CCA addition is required both for tRNA processing and repair. Also involved in tRNA surveillance by mediating tandem CCA addition to generate a CCACCA at the 3' terminus of unstable tRNAs. While stable tRNAs receive only 3'-terminal CCA, unstable tRNAs are marked with CCACCA and rapidly degraded. This chain is CCA-adding enzyme, found in Streptococcus pyogenes serotype M1.